Here is a 292-residue protein sequence, read N- to C-terminus: Cytidine deaminase (292 aa).

2 consecutive CMP/dCMP-type deaminase domains span residues 47–167 (TPLK…FGPK) and 186–292 (DHQD…YYSL). Substrate is bound at residue 88 to 90 (NQE). His-101 is a binding site for Zn(2+). Glu-103 (proton donor) is an active-site residue. 2 residues coordinate Zn(2+): Cys-128 and Cys-131.

It belongs to the cytidine and deoxycytidylate deaminase family. Homodimer. It depends on Zn(2+) as a cofactor.

It catalyses the reaction cytidine + H2O + H(+) = uridine + NH4(+). The catalysed reaction is 2'-deoxycytidine + H2O + H(+) = 2'-deoxyuridine + NH4(+). Functionally, this enzyme scavenges exogenous and endogenous cytidine and 2'-deoxycytidine for UMP synthesis. This chain is Cytidine deaminase, found in Haemophilus influenzae (strain 86-028NP).